Here is a 438-residue protein sequence, read N- to C-terminus: DNA primase DnaG (438 aa).

One can recognise a Toprim domain in the interval 169-243 (DSIIVVEGRA…DIDYVARAPY (75 aa)). Residues Glu-175, Asp-217, and Asp-219 each contribute to the Mg(2+) site.

Belongs to the archaeal DnaG primase family. In terms of assembly, forms a ternary complex with MCM helicase and DNA. It depends on Mg(2+) as a cofactor.

The enzyme catalyses ssDNA + n NTP = ssDNA/pppN(pN)n-1 hybrid + (n-1) diphosphate.. In terms of biological role, RNA polymerase that catalyzes the synthesis of short RNA molecules used as primers for DNA polymerase during DNA replication. This is DNA primase DnaG from Methanococcus maripaludis (strain C6 / ATCC BAA-1332).